The chain runs to 786 residues: Succinoglycan biosynthesis transport protein ExoP (786 aa).

The Cytoplasmic portion of the chain corresponds to 1–42 (MNRTAPMKQRSVPLSSIMPSEEQSDGFIDLDRLVAAVFRRAR). A helical transmembrane segment spans residues 43–66 (LVAAFVVLFIALGAAYLLFATPYY). The Periplasmic segment spans residues 67–689 (TSMTQILLDE…LIENARNAFD (623 aa)). 583–590 (ALPDEGKS) serves as a coordination point for ATP. A helical membrane pass occupies residues 690-711 (YVVVDLAALAPVVDAKAFAPLA). At 712–786 (DGILFVVEWG…ENTITENTAA (75 aa)) the chain is on the cytoplasmic side.

This sequence to B.solanacearum EpsB.

It is found in the cell membrane. Its pathway is glycan metabolism; exopolysaccharide biosynthesis. The sequence is that of Succinoglycan biosynthesis transport protein ExoP (exoP) from Rhizobium meliloti (strain 1021) (Ensifer meliloti).